Reading from the N-terminus, the 190-residue chain is Early nodulin-like protein 12 (190 aa).

A signal peptide spans 1 to 21 (MGIIVPVLTLVFLLFAKVSHG). A Phytocyanin domain is found at 26-130 (RVILVGGSVG…GEKITLVVLA (105 aa)). An N-linked (GlcNAc...) asparagine glycan is attached at asparagine 44. Cysteines 84 and 118 form a disulfide. A disordered region spans residues 135-164 (GGGSSSGDAPKVSPVSPTAQTPAPAPGPAA). The segment covering 151–164 (PTAQTPAPAPGPAA) has biased composition (low complexity). Asparagine 167 carries GPI-anchor amidated asparagine lipidation. Residues 168–190 (AAVGLKVASGWFLTAVVVGLAMA) constitute a propeptide, removed in mature form.

Belongs to the early nodulin-like (ENODL) family. As to expression, confined to flowers and siliques. Expressed in female gametophytes.

The protein resides in the cell membrane. In terms of biological role, may act as a carbohydrate transporter. Required, together with ENODL11, ENODL12, ENODL13, ENODL14 and ENODL15, for male-female communication and pollen tube reception and burst at the synergid cell surface of the female gametophyte. This is Early nodulin-like protein 12 from Arabidopsis thaliana (Mouse-ear cress).